Reading from the N-terminus, the 137-residue chain is Large ribosomal subunit protein bL12 (137 aa).

This sequence belongs to the bacterial ribosomal protein bL12 family. Homodimer. Part of the ribosomal stalk of the 50S ribosomal subunit. Forms a multimeric L10(L12)X complex, where L10 forms an elongated spine to which 2 to 4 L12 dimers bind in a sequential fashion. Binds GTP-bound translation factors.

Functionally, forms part of the ribosomal stalk which helps the ribosome interact with GTP-bound translation factors. Is thus essential for accurate translation. This is Large ribosomal subunit protein bL12 from Synechococcus sp. (strain JA-3-3Ab) (Cyanobacteria bacterium Yellowstone A-Prime).